The sequence spans 442 residues: MSSRDFSNDLFSINIEENAGCVVSAKVQANPLVTQKCHKEALKTVKKNVVLPGFRKGKAPDNIVESRYSTQMEQELRRLFLRASFEALSQMCDRKPLSPKAVRSSAIDTCNPVNGGSVSFLYEAFPVIPSLPWEQLSLPDPEPVKEISEEDLENGLKNVAYFFATKTPVTRPSQEGDFISLSLYVSKRGDENSTPVAIFENKYFKISEEDMTDSFKARFLNVSTGHRVEEEIGSEDIQSFLNGDLLTFTVNAVIEISSPEMDDEKARQLQAESLEDLKKKLRIQLENQAKEAQHQKRFSDAEDALAQLIDFDLPESLLQEREELLSREKLLNARLVKYCSDSELEEQKQALLEEAKADARKAVKLLFLTQKVFSEKGLSISREELQYMMDVCSRERFGGYPPKDISNEMIQELVLVARDRLTYRKAIEAISSEKKDLEVVPS.

In terms of domain architecture, PPIase FKBP-type spans 176 to 259 (GDFISLSLYV…VNAVIEISSP (84 aa)).

This sequence belongs to the FKBP-type PPIase family. Tig subfamily.

The protein localises to the cytoplasm. The catalysed reaction is [protein]-peptidylproline (omega=180) = [protein]-peptidylproline (omega=0). Involved in protein export. Acts as a chaperone by maintaining the newly synthesized protein in an open conformation. Functions as a peptidyl-prolyl cis-trans isomerase. The chain is Trigger factor (tig) from Chlamydia trachomatis serovar D (strain ATCC VR-885 / DSM 19411 / UW-3/Cx).